Consider the following 356-residue polypeptide: DNA polymerase IV (356 aa).

One can recognise a UmuC domain in the interval I6–G187. Mg(2+)-binding residues include D10 and D105. E106 is a catalytic residue.

The protein belongs to the DNA polymerase type-Y family. Monomer. Mg(2+) is required as a cofactor.

The protein resides in the cytoplasm. The enzyme catalyses DNA(n) + a 2'-deoxyribonucleoside 5'-triphosphate = DNA(n+1) + diphosphate. Functionally, poorly processive, error-prone DNA polymerase involved in untargeted mutagenesis. Copies undamaged DNA at stalled replication forks, which arise in vivo from mismatched or misaligned primer ends. These misaligned primers can be extended by PolIV. Exhibits no 3'-5' exonuclease (proofreading) activity. May be involved in translesional synthesis, in conjunction with the beta clamp from PolIII. In Staphylococcus epidermidis (strain ATCC 35984 / DSM 28319 / BCRC 17069 / CCUG 31568 / BM 3577 / RP62A), this protein is DNA polymerase IV.